The sequence spans 916 residues: MQRDGTRSARRMDEGDRRTGSAGRSGSRELGRGFSYYNKYLARLQQNLRDTKRFFRDIKLTYSGAPGGPDTEFSGAEGEFGQLHSITFPRQEEEYLKLTVRCRPCIFILGQNCSGRGRVANGLLGGQLLPILTHGDIECCKRRRIRFRHGKQTLVSLALPEQYELVHQLVAHQGKWDTIPEEDLDVPEDEEDPAHRLAELEVTLPHQLLQDVDIVVSPCRSSQAVSMTLEDYVDHVQSIVVYAVSEEMLSKQDEEELTEIKEKYKLPVFFIRTSSTKDRLIGGSEGVRSVLYEQLIELGYLQRGLCNCGAAGSGSTAPSMLVEQFEKIRQLSTFSRQVLQMHLVDAAIVLNMVHSRCLDLFINKAFDMHRDLQITPKRLEYTRQKENELYESLMRISDRKQEELKDMIVETLNSMREQLLEDAANMQFKDIVIPQNGEPVSAHEVKCCIFQIKELIISRLNQAVVNKLISSVDYLRESFVGTMERCLRSLEKSQQESSSHVTSNHLKQILNAAYHVEVTFNSGSTVTRMVWEQIVQIIQRITWVSPPTITPEWKRRVAQDAIETLSASKLAKSICSQFCKRLKSSHEAFAASLKQLEVGHSGRLEKTNDLWLRVRKDHAPRLARLSLESRSLQDVLLHGKPRIGRELGRGQYGVVYLCDSWGGHFPCALKSVVPPDEKHWNDLALEFHYMRSLPKHERLVDLHGSVIDYSYGGGSSIAVLLITERLHRDLYVGLKTGLSLETRLQIALDVVEGIRFLHNQGVVHRDIKLKNVLLDKKHRAKITDLGFCKPEAMMSGSIVGTPIHMAPELFSGKYDNSVDVYAFGILFWYICSGSVKLPEAFEKCASKDHLWNNVRKGARPERLTIFDEECWKLMEACWNGDPSQRPLMGIVQPMLQGIMDRLCHTQETGKALEDST.

Basic and acidic residues predominate over residues 1–19; it reads MQRDGTRSARRMDEGDRRT. The tract at residues 1–27 is disordered; that stretch reads MQRDGTRSARRMDEGDRRTGSAGRSGS. Residues 641 to 895 enclose the Protein kinase domain; the sequence is PRIGRELGRG…PLMGIVQPML (255 aa). Residues 647–655 and Lys670 contribute to the ATP site; that span reads LGRGQYGVV. The Proton acceptor role is filled by Asp766.

Belongs to the protein kinase superfamily. Ser/Thr protein kinase family.

The protein resides in the cytoplasm. It localises to the cell membrane. It is found in the apical cell membrane. Its subcellular location is the basolateral cell membrane. The protein localises to the cell junction. It carries out the reaction L-seryl-[protein] + ATP = O-phospho-L-seryl-[protein] + ADP + H(+). The enzyme catalyses L-threonyl-[protein] + ATP = O-phospho-L-threonyl-[protein] + ADP + H(+). The catalysed reaction is L-tyrosyl-[protein] + ATP = O-phospho-L-tyrosyl-[protein] + ADP + H(+). Its function is as follows. May act as a positive regulator of ERK phosphorylation downstream of fibroblast growth factor-receptor activation. May induce both caspase-dependent apoptosis and caspase-independent cell death. May play a role in the embryonic development. The chain is Dual serine/threonine and tyrosine protein kinase (dstyk) from Xenopus laevis (African clawed frog).